The sequence spans 271 residues: Acetyl-coenzyme A carboxylase carboxyl transferase subunit alpha (271 aa).

The 247-residue stretch at Met-1–Glu-247 folds into the CoA carboxyltransferase C-terminal domain.

It belongs to the AccA family. In terms of assembly, acetyl-CoA carboxylase is a heterohexamer composed of biotin carboxyl carrier protein (AccB), biotin carboxylase (AccC) and two subunits each of ACCase subunit alpha (AccA) and ACCase subunit beta (AccD).

It localises to the cytoplasm. It carries out the reaction N(6)-carboxybiotinyl-L-lysyl-[protein] + acetyl-CoA = N(6)-biotinyl-L-lysyl-[protein] + malonyl-CoA. The protein operates within lipid metabolism; malonyl-CoA biosynthesis; malonyl-CoA from acetyl-CoA: step 1/1. In terms of biological role, component of the acetyl coenzyme A carboxylase (ACC) complex. First, biotin carboxylase catalyzes the carboxylation of biotin on its carrier protein (BCCP) and then the CO(2) group is transferred by the carboxyltransferase to acetyl-CoA to form malonyl-CoA. This is Acetyl-coenzyme A carboxylase carboxyl transferase subunit alpha from Clostridium perfringens (strain ATCC 13124 / DSM 756 / JCM 1290 / NCIMB 6125 / NCTC 8237 / Type A).